Consider the following 300-residue polypeptide: Iron-dependent extradiol dioxygenase (300 aa).

VOC domains are found at residues 5–120 and 142–270; these read SLAY…AFHG and GLGH…FGCE. Fe cation is bound at residue His145. Substrate is bound by residues His200, His215, Asp250, and Tyr256. His215 is a Fe cation binding site. Residue Glu266 participates in Fe cation binding.

It belongs to the extradiol ring-cleavage dioxygenase family. Homodimer. The cofactor is Fe(2+).

The catalysed reaction is 3,4-dihydroxy-9,10-secoandrosta-1,3,5(10)-triene-9,17-dione + O2 = (1E,2Z)-3-hydroxy-5,9,17-trioxo-4,5:9,10-disecoandrosta-1(10),2-dien-4-oate + H(+). Its pathway is steroid metabolism; cholesterol metabolism. In terms of biological role, catalyzes the meta-cleavage of 3,4-dihydroxy-9,10-seconandrost-1,3,5(10)-triene-9,17-dione (3,4-DHSA) to produce 4,5-9,10-diseco-3-hydroxy-5,9,17-trioxoandrosta-1(10),2-diene-4-oic acid (4,9-DSHA). Also involved in biphenyl and polychlorinated biphenyls (PCBs) degradation. The sequence is that of Iron-dependent extradiol dioxygenase (hsaC) from Rhodococcus jostii (strain RHA1).